The chain runs to 1187 residues: Serine/threonine-protein kinase SIK3 homolog (1187 aa).

Residues 1–15 (MAAVSSGAAAAAGIP) show a composition bias toward low complexity. The tract at residues 1–41 (MAAVSSGAAAAAGIPNPNPNRERPQQQQQQQPASAALHPVA) is disordered. A Protein kinase domain is found at 59-310 (YEMERTIGKG…MEQICKNKWM (252 aa)). ATP is bound by residues 65-73 (IGKGNFAVV) and K88. D181 acts as the Proton acceptor in catalysis. Phosphothreonine is present on T214. S218 is modified (phosphoserine). Residues 337–377 (LINEQVLMAMAEMGFDRERTLQSLHADSYDHYSATYSLLSD) enclose the UBA domain. Disordered stretches follow at residues 548–587 (LKRPRGQSPLVTSPHPIPAVAPVDEEGSDAEPDPEAVQRS), 697–776 (IQPS…PPGS), and 1060–1092 (CADAADAGMESDHNGYGSRSTQSDSYRPRGALQ). A compositionally biased stretch (acidic residues) spans 570–581 (VDEEGSDAEPDP). The segment covering 739 to 749 (VQYQHGSALYQ) has biased composition (polar residues).

Belongs to the protein kinase superfamily. CAMK Ser/Thr protein kinase family. SNF1 subfamily. Requires Mg(2+) as cofactor.

It carries out the reaction L-seryl-[protein] + ATP = O-phospho-L-seryl-[protein] + ADP + H(+). The catalysed reaction is L-threonyl-[protein] + ATP = O-phospho-L-threonyl-[protein] + ADP + H(+). The polypeptide is Serine/threonine-protein kinase SIK3 homolog (Danio rerio (Zebrafish)).